A 340-amino-acid polypeptide reads, in one-letter code: Glycerol-3-phosphate dehydrogenase [NAD(P)+] (340 aa).

4 residues coordinate NADPH: Ser-15, Tyr-16, His-36, and Lys-110. Sn-glycerol 3-phosphate-binding residues include Lys-110, Gly-139, and Thr-141. Ala-143 contacts NADPH. Positions 195, 248, 258, 259, and 260 each coordinate sn-glycerol 3-phosphate. Lys-195 functions as the Proton acceptor in the catalytic mechanism. Residue Arg-259 participates in NADPH binding. NADPH contacts are provided by Val-283 and Glu-285.

This sequence belongs to the NAD-dependent glycerol-3-phosphate dehydrogenase family.

Its subcellular location is the cytoplasm. It carries out the reaction sn-glycerol 3-phosphate + NAD(+) = dihydroxyacetone phosphate + NADH + H(+). The catalysed reaction is sn-glycerol 3-phosphate + NADP(+) = dihydroxyacetone phosphate + NADPH + H(+). It participates in membrane lipid metabolism; glycerophospholipid metabolism. Functionally, catalyzes the reduction of the glycolytic intermediate dihydroxyacetone phosphate (DHAP) to sn-glycerol 3-phosphate (G3P), the key precursor for phospholipid synthesis. The protein is Glycerol-3-phosphate dehydrogenase [NAD(P)+] of Baumannia cicadellinicola subsp. Homalodisca coagulata.